The sequence spans 173 residues: Bifunctional protein PyrR (173 aa).

The short motif at 93–105 (VILVDDVLYTGRT) is the PRPP-binding element.

The protein belongs to the purine/pyrimidine phosphoribosyltransferase family. PyrR subfamily. Homodimer and homohexamer; in equilibrium.

It carries out the reaction UMP + diphosphate = 5-phospho-alpha-D-ribose 1-diphosphate + uracil. Functionally, regulates transcriptional attenuation of the pyrimidine nucleotide (pyr) operon by binding in a uridine-dependent manner to specific sites on pyr mRNA. This disrupts an antiterminator hairpin in the RNA and favors formation of a downstream transcription terminator, leading to a reduced expression of downstream genes. In terms of biological role, also displays a weak uracil phosphoribosyltransferase activity which is not physiologically significant. The protein is Bifunctional protein PyrR of Streptococcus suis (strain 05ZYH33).